Here is a 141-residue protein sequence, read N- to C-terminus: Auxin-responsive protein SAUR61 (141 aa).

The protein belongs to the ARG7 family.

It is found in the cell membrane. In terms of biological role, may promote auxin-stimulated organ elongation, such as hypocotyls, stamen filaments and petals. The polypeptide is Auxin-responsive protein SAUR61 (Arabidopsis thaliana (Mouse-ear cress)).